The primary structure comprises 232 residues: Orotate phosphoribosyltransferase (232 aa).

5-phospho-alpha-D-ribose 1-diphosphate is bound by residues Arg107, Lys108, Lys111, His113, and 133-141 (EDLTTAGGS). Thr137 provides a ligand contact to orotate.

This sequence belongs to the purine/pyrimidine phosphoribosyltransferase family. PyrE subfamily. As to quaternary structure, homodimer. Mg(2+) is required as a cofactor.

The enzyme catalyses orotidine 5'-phosphate + diphosphate = orotate + 5-phospho-alpha-D-ribose 1-diphosphate. It functions in the pathway pyrimidine metabolism; UMP biosynthesis via de novo pathway; UMP from orotate: step 1/2. Catalyzes the transfer of a ribosyl phosphate group from 5-phosphoribose 1-diphosphate to orotate, leading to the formation of orotidine monophosphate (OMP). This chain is Orotate phosphoribosyltransferase, found in Sinorhizobium fredii (strain NBRC 101917 / NGR234).